The sequence spans 306 residues: tRNA dimethylallyltransferase (306 aa).

ATP is bound at residue 15 to 22 (GPTASGKS). 17–22 (TASGKS) serves as a coordination point for substrate. The interaction with substrate tRNA stretch occupies residues 40–43 (DSMQ).

Belongs to the IPP transferase family. Monomer. Mg(2+) serves as cofactor.

The enzyme catalyses adenosine(37) in tRNA + dimethylallyl diphosphate = N(6)-dimethylallyladenosine(37) in tRNA + diphosphate. Its function is as follows. Catalyzes the transfer of a dimethylallyl group onto the adenine at position 37 in tRNAs that read codons beginning with uridine, leading to the formation of N6-(dimethylallyl)adenosine (i(6)A). This chain is tRNA dimethylallyltransferase, found in Methylobacterium sp. (strain 4-46).